Reading from the N-terminus, the 206-residue chain is Pyridoxal 5'-phosphate synthase subunit PdxT (206 aa).

Residue 59-61 coordinates L-glutamine; that stretch reads GES. Cys-91 acts as the Nucleophile in catalysis. L-glutamine contacts are provided by residues Arg-123 and 151–152; that span reads IR. Active-site charge relay system residues include His-187 and Glu-189.

This sequence belongs to the glutaminase PdxT/SNO family. In the presence of PdxS, forms a dodecamer of heterodimers. Only shows activity in the heterodimer.

It catalyses the reaction aldehydo-D-ribose 5-phosphate + D-glyceraldehyde 3-phosphate + L-glutamine = pyridoxal 5'-phosphate + L-glutamate + phosphate + 3 H2O + H(+). The enzyme catalyses L-glutamine + H2O = L-glutamate + NH4(+). It functions in the pathway cofactor biosynthesis; pyridoxal 5'-phosphate biosynthesis. In terms of biological role, catalyzes the hydrolysis of glutamine to glutamate and ammonia as part of the biosynthesis of pyridoxal 5'-phosphate. The resulting ammonia molecule is channeled to the active site of PdxS. This Mycobacterium sp. (strain KMS) protein is Pyridoxal 5'-phosphate synthase subunit PdxT.